A 591-amino-acid chain; its full sequence is V-type ATP synthase alpha chain (591 aa).

233–240 serves as a coordination point for ATP; sequence GPFGAGKT.

Belongs to the ATPase alpha/beta chains family.

The catalysed reaction is ATP + H2O + 4 H(+)(in) = ADP + phosphate + 5 H(+)(out). In terms of biological role, produces ATP from ADP in the presence of a proton gradient across the membrane. The V-type alpha chain is a catalytic subunit. In Streptococcus pyogenes serotype M1, this protein is V-type ATP synthase alpha chain.